The following is a 252-amino-acid chain: Thiamine thiazole synthase (252 aa).

NAD(+) is bound by residues Ser-35, 54–55, Gly-62, Val-126, and 152–154; these read EK and HVD. 2 residues coordinate Fe cation: Asp-154 and His-169. Met-217 provides a ligand contact to NAD(+). Residue Arg-227 coordinates glycine.

The protein belongs to the THI4 family. In terms of assembly, homooctamer; tetramer of dimers. It depends on Fe(2+) as a cofactor.

The enzyme catalyses hydrogen sulfide + glycine + NAD(+) = ADP-5-ethyl-4-methylthiazole-2-carboxylate + nicotinamide + 3 H2O + H(+). It participates in cofactor biosynthesis; thiamine diphosphate biosynthesis. Involved in the biosynthesis of the thiazole moiety of thiamine. Catalyzes the conversion of NAD and glycine to adenosine diphosphate 5-(2-hydroxyethyl)-4-methylthiazole-2-carboxylate (ADT), an adenylated thiazole intermediate, using free sulfide as a source of sulfur. The chain is Thiamine thiazole synthase from Pyrococcus horikoshii (strain ATCC 700860 / DSM 12428 / JCM 9974 / NBRC 100139 / OT-3).